The sequence spans 121 residues: Large ribosomal subunit protein uL14 (121 aa).

The protein belongs to the universal ribosomal protein uL14 family. As to quaternary structure, part of the 50S ribosomal subunit. Forms a cluster with proteins L3 and L19. In the 70S ribosome, L14 and L19 interact and together make contacts with the 16S rRNA in bridges B5 and B8.

Functionally, binds to 23S rRNA. Forms part of two intersubunit bridges in the 70S ribosome. In Prochlorococcus marinus (strain MIT 9313), this protein is Large ribosomal subunit protein uL14.